We begin with the raw amino-acid sequence, 493 residues long: MTTVRTRIAPSPTGDPHVGTAYIALFNYCFAKQHGGEFILRIEDTDQLRSTRESEQQIFDALRWMGIEWSEGPDVGGPHGPYRQSERGDIYQKYAQQLVELGHAFPCFCTAEELDEMRAEQQAKGETPRYDGRALLLSKEEVQRRLDAGEPHVIRMKVPTEGVCVVPDMLRGEVEIPWDRMDMQVLMKTDGLPTYFLANVVDDHLMGITHVLRGEEWLPSAPKLILLYEYFGWDKPQLCYMPLLRNPDKSKLSKRKNPTSVTFYERMGFMPEAMLNYLGRMGWSMPDEREKFSLQEMVDNFDLSRVSLGGPIFDIEKLSWLNGQWLRDLPVEEFASRLKTWALNPDYMMKIAPHVQGRVETFSQVAPLAGFFFAGGVTPDVKLFEHKKLSPEQVRQVMQLILWKLESLRQWEKDRIMGCIQAVVEHLKLKLRDAMPLMFAAITGQANSVSVTDAMEILGPDLTRFRLRQALDLLGGVSKKENKEWEKLLGSIA.

Positions 10–20 (PSPTGDPHVGT) match the 'HIGH' region motif. The 'KMSKS' region signature appears at 251-255 (KLSKR). Residue Lys-254 coordinates ATP.

This sequence belongs to the class-I aminoacyl-tRNA synthetase family. Glutamate--tRNA ligase type 1 subfamily. As to quaternary structure, monomer.

It localises to the cytoplasm. The enzyme catalyses tRNA(Glu) + L-glutamate + ATP = L-glutamyl-tRNA(Glu) + AMP + diphosphate. Catalyzes the attachment of glutamate to tRNA(Glu) in a two-step reaction: glutamate is first activated by ATP to form Glu-AMP and then transferred to the acceptor end of tRNA(Glu). The polypeptide is Glutamate--tRNA ligase (Pseudomonas savastanoi pv. phaseolicola (strain 1448A / Race 6) (Pseudomonas syringae pv. phaseolicola (strain 1448A / Race 6))).